Here is a 337-residue protein sequence, read N- to C-terminus: MANGQISPQRAVTKPQSWWLTSEPRPSLMLQLPKPSPSAKPCASVEEAYEICRQVTAQYAKTFYLGTLLMPPAKRRAIWAIYLWCRRTDELVDGPQAATTTPETLDHWERRLEGIFAGQPQDDADVALVDTLETFPLDIQPFRDMIAGQRMDLYRSRYQTFEELDLYCYRVAGTVGLMSSAVLGVDTGNGQAPWQPDAVYIPQEEAIALGVANQLTNILRDVGEDVERGRIYLPLEDLERFNYSEQDLLNGVNDDRWRSLMKFEIDRARHYFEDAERGIRALNRDARWPVWTALMLYKGILDVIEANNYNVFNRRAYVPTPKKLLYLPVAWLRAQVL.

Belongs to the phytoene/squalene synthase family. ATP is required as a cofactor. It depends on Mn(2+) as a cofactor. Requires Mg(2+) as cofactor.

The catalysed reaction is 2 (2E,6E,10E)-geranylgeranyl diphosphate = 15-cis-phytoene + 2 diphosphate. It participates in carotenoid biosynthesis; phytoene biosynthesis. Functionally, involved in the biosynthesis of carotenoids. Catalyzes the condensation of two molecules of geranylgeranyl diphosphate (GGPP) to give prephytoene diphosphate (PPPP) and the subsequent rearrangement of the cyclopropylcarbinyl intermediate to yield 15-cis-phytoene. This is 15-cis-phytoene synthase (crtB) from Synechocystis sp. (strain ATCC 27184 / PCC 6803 / Kazusa).